The primary structure comprises 207 residues: ATP synthase subunit b 2 (207 aa).

The chain crosses the membrane as a helical span at residues 53–72; that stretch reads TYASQLLWLVITFSVFYLLM.

Belongs to the ATPase B chain family. F-type ATPases have 2 components, F(1) - the catalytic core - and F(0) - the membrane proton channel. F(1) has five subunits: alpha(3), beta(3), gamma(1), delta(1), epsilon(1). F(0) has three main subunits: a(1), b(2) and c(10-14). The alpha and beta chains form an alternating ring which encloses part of the gamma chain. F(1) is attached to F(0) by a central stalk formed by the gamma and epsilon chains, while a peripheral stalk is formed by the delta and b chains.

It localises to the cell inner membrane. Functionally, f(1)F(0) ATP synthase produces ATP from ADP in the presence of a proton or sodium gradient. F-type ATPases consist of two structural domains, F(1) containing the extramembraneous catalytic core and F(0) containing the membrane proton channel, linked together by a central stalk and a peripheral stalk. During catalysis, ATP synthesis in the catalytic domain of F(1) is coupled via a rotary mechanism of the central stalk subunits to proton translocation. Its function is as follows. Component of the F(0) channel, it forms part of the peripheral stalk, linking F(1) to F(0). The b'-subunit is a diverged and duplicated form of b found in plants and photosynthetic bacteria. In Rhizobium leguminosarum bv. trifolii (strain WSM2304), this protein is ATP synthase subunit b 2 (atpF2).